A 144-amino-acid polypeptide reads, in one-letter code: Bacilliredoxin BT9727_3899 (144 aa).

The protein belongs to the bacilliredoxin family.

The protein is Bacilliredoxin BT9727_3899 of Bacillus thuringiensis subsp. konkukian (strain 97-27).